The primary structure comprises 202 residues: N-(5'-phosphoribosyl)anthranilate isomerase (202 aa).

The protein belongs to the TrpF family.

The enzyme catalyses N-(5-phospho-beta-D-ribosyl)anthranilate = 1-(2-carboxyphenylamino)-1-deoxy-D-ribulose 5-phosphate. It functions in the pathway amino-acid biosynthesis; L-tryptophan biosynthesis; L-tryptophan from chorismate: step 3/5. The protein is N-(5'-phosphoribosyl)anthranilate isomerase of Listeria monocytogenes serovar 1/2a (strain ATCC BAA-679 / EGD-e).